A 221-amino-acid chain; its full sequence is MLRAALSGSSYVGVFATATDEYLLVRPDIEESLQSEFETELDVTAVPTTIAGSGTVGSLAVGNENGLLVTERVTDRERDRLETETGLPVVELPGNINAAGNVVLANNEGAFVHPDLSRDALSAIEEALSVPVERGRIADVQTVGTAAVVTDDGVLSHPKTTDEKLDFLEELFGVYADIGTINYGGPLVGSGLVANNTGYIAGEETTGPELGRIEDALGFIQ.

This sequence belongs to the eIF-6 family.

Its function is as follows. Binds to the 50S ribosomal subunit and prevents its association with the 30S ribosomal subunit to form the 70S initiation complex. This Natronomonas pharaonis (strain ATCC 35678 / DSM 2160 / CIP 103997 / JCM 8858 / NBRC 14720 / NCIMB 2260 / Gabara) (Halobacterium pharaonis) protein is Translation initiation factor 6.